The primary structure comprises 119 residues: Large ribosomal subunit protein bL20 (119 aa).

It belongs to the bacterial ribosomal protein bL20 family.

Functionally, binds directly to 23S ribosomal RNA and is necessary for the in vitro assembly process of the 50S ribosomal subunit. It is not involved in the protein synthesizing functions of that subunit. The chain is Large ribosomal subunit protein bL20 from Xylella fastidiosa (strain 9a5c).